A 390-amino-acid polypeptide reads, in one-letter code: Cystathionine beta-lyase MetC (390 aa).

N6-(pyridoxal phosphate)lysine is present on K200.

It belongs to the trans-sulfuration enzymes family. As to quaternary structure, homotetramer. It depends on pyridoxal 5'-phosphate as a cofactor.

The protein resides in the cytoplasm. The enzyme catalyses L,L-cystathionine + H2O = L-homocysteine + pyruvate + NH4(+). It catalyses the reaction an S-substituted L-cysteine + H2O = a thiol + pyruvate + NH4(+). It participates in amino-acid biosynthesis; L-methionine biosynthesis via de novo pathway; L-homocysteine from L-cystathionine: step 1/1. Its function is as follows. Catalyzes the transformation of cystathionine into homocysteine. Also exhibits cysteine desulfhydrase activity in vitro, producing sulfide from cysteine. In Bacillus subtilis (strain 168), this protein is Cystathionine beta-lyase MetC (metC).